Consider the following 410-residue polypeptide: Exodeoxyribonuclease 7 large subunit (410 aa).

The protein belongs to the XseA family. In terms of assembly, heterooligomer composed of large and small subunits.

It localises to the cytoplasm. It carries out the reaction Exonucleolytic cleavage in either 5'- to 3'- or 3'- to 5'-direction to yield nucleoside 5'-phosphates.. Its function is as follows. Bidirectionally degrades single-stranded DNA into large acid-insoluble oligonucleotides, which are then degraded further into small acid-soluble oligonucleotides. The polypeptide is Exodeoxyribonuclease 7 large subunit (Alkaliphilus metalliredigens (strain QYMF)).